The following is a 165-amino-acid chain: Cyclic pyranopterin monophosphate synthase (165 aa).

Residues 83-85 and 120-121 each bind substrate; these read FCH and ME. Aspartate 135 is an active-site residue.

Belongs to the MoaC family. As to quaternary structure, homohexamer; trimer of dimers.

The catalysed reaction is (8S)-3',8-cyclo-7,8-dihydroguanosine 5'-triphosphate = cyclic pyranopterin phosphate + diphosphate. The protein operates within cofactor biosynthesis; molybdopterin biosynthesis. In terms of biological role, catalyzes the conversion of (8S)-3',8-cyclo-7,8-dihydroguanosine 5'-triphosphate to cyclic pyranopterin monophosphate (cPMP). This chain is Cyclic pyranopterin monophosphate synthase, found in Xanthomonas campestris pv. campestris (strain B100).